A 73-amino-acid chain; its full sequence is Putative antimicrobial peptide clone 4 (73 aa).

The first 22 residues, 1–22 (MQMKYLIPIFFLVLIVADHCHA), serve as a signal peptide directing secretion. The propeptide occupies 45-73 (DITSQIEQYRNLQKREAELEDILANLPVY).

The protein belongs to the non-disulfide-bridged peptide (NDBP) superfamily. Short antimicrobial peptide (group 4) family. As to expression, expressed by the venom gland.

It is found in the secreted. Functionally, antimicrobial peptide. Has a high antibacterial activity against the Gram-positive bacterium S.aureus (MIC=5-17.30 uM), the methicillin-resistant S.aureus (MRSA) (MIC=17.30 uM), and E.faecalis (MIC=69.23 uM). Has antifungal activity against Candida spp. and one Cryptococcus neoformans strains with MICs values ranging from 6.25 to 100 uM. Also shows an inhibitory activity on C.albicans biofilms at high concentrations. Has a moderate hemolytic potency (18% at 20 uM). Also inhibits the growth of the five cancer cell lines tested. In the model of polymicrobial sepsis, it exhibits an antibiotic effect, reducing the levels of microorganisms in the infectious focus and the inflammatory responses in the lung and cecum of septic animals. This is Putative antimicrobial peptide clone 4 from Tityus costatus (Brazilian scorpion).